A 509-amino-acid chain; its full sequence is Src substrate cortactin (509 aa).

A disordered region spans residues 1–28 (MWKASAGHAVSITQDDGGADDWETDPDF). Positions 17-28 (GGADDWETDPDF) are enriched in acidic residues. 5 Cortactin repeats span residues 80–116 (ASHG…SQVD), 117–153 (SVRG…SQKD), 154–190 (YSSG…SQKD), 191–227 (YSKG…SQKD), and 228–264 (YVKG…SQKD). 2 positions are modified to N6-acetyllysine: K87 and K107. S113 is subject to Phosphoserine. R119 carries the post-translational modification Omega-N-methylarginine. K124 is modified (N6-acetyllysine). The residue at position 144 (K144) is an N6-acetyllysine; alternate. K144 participates in a covalent cross-link: Glycyl lysine isopeptide (Lys-Gly) (interchain with G-Cter in SUMO1); alternate. K144 is covalently cross-linked (Glycyl lysine isopeptide (Lys-Gly) (interchain with G-Cter in SUMO2); alternate). S150 carries the phosphoserine modification. 3 positions are modified to N6-acetyllysine: K152, K161, and K171. Residue K181 is modified to N6-acetyllysine; alternate. K181 is covalently cross-linked (Glycyl lysine isopeptide (Lys-Gly) (interchain with G-Cter in SUMO1); alternate). K181 participates in a covalent cross-link: Glycyl lysine isopeptide (Lys-Gly) (interchain with G-Cter in SUMO2); alternate. N6-acetyllysine occurs at positions 193 and 198. Residue K218 forms a Glycyl lysine isopeptide (Lys-Gly) (interchain with G-Cter in SUMO1) linkage. K235 is modified (N6-acetyllysine). S261 carries the phosphoserine modification. One copy of the Cortactin 6; truncated repeat lies at 265–287 (YAKGFGGKYGVQKDRMDKNASTF). 4 positions are modified to N6-acetyllysine: K267, K272, K277, and K309. The stretch at 311 to 364 (SNIRANFENLAKEREQEDRRKAEAERAQRMAQERQEQEEARRKLEEQARAKKQT) forms a coiled coil. Positions 318 to 409 (ENLAKEREQE…EPEPEYSTEA (92 aa)) are disordered. Positions 320–359 (LAKEREQEDRRKAEAERAQRMAQERQEQEEARRKLEEQAR) are enriched in basic and acidic residues. T364 is subject to Phosphothreonine. S368, S370, S380, and S381 each carry phosphoserine. The residue at position 384 (Y384) is a Phosphotyrosine; by FAK1. Residues 393–406 (EPSYGSSEPEPEYS) are compositionally biased toward low complexity. Y405 bears the Phosphotyrosine mark. A Phosphoserine modification is found at S406. A phosphotyrosine; by FAK1 mark is found at Y429 and Y445. 2 positions are modified to phosphotyrosine; by SRC: Y445 and Y448. In terms of domain architecture, SH3 spans 451–509 (DLGITAIALYDYQAAGDDEISFDPDDVITNIEMIDDGWWRGVCKGRYGLFPANYVELRQ).

In terms of assembly, part of a complex composed of NEDD9, AURKA and CTTN; within the complex NEDD9 acts as a scaffold protein and is required for complex formation. Interacts (via N-terminus) with NEDD9. Identified in a complex containing FGFR4, NCAM1, CDH2, PLCG1, FRS2, SRC, SHC1, GAP43 and CTTN. Forms a complex with ABL1 and MYLK. Interacts with SHANK2 and SHANK3 (via its SH3 domain). Interacts with PLXDC2 and SRCIN1. Interacts with SAMSN1 (via SH3 domain). Interacts (via SH3 domain) with ASAP1 (via Pro-rich region). Interacts with FER. Interacts with FGD1. Interacts with ABL2. Interacts with CTTNBP2NL; this interaction may target CTTN to stress fibers. Interacts with CTTNBP2; this interaction may target CTTN at the cell cortex or dendritic spines. Interacts (via SH3 domain) with DNM2. Interacts with ACTN1. Interacts with KCNA2 (via non-phosphorylated C-terminus). Interacts with PTK2/FAK1. Interacts with KCNH1. Interacts (via SH3 domain) with DIP2A (via N-terminus); the interaction enhances CTTN acetylation and is required for proper synaptic transmission. Interacts with XIRP1 (via N-terminus); the interaction promotes CTTN localization to intercalated disks in cardiomyocytes. Acetylated. Post-translationally, phosphorylated by FER. Phosphorylated in response to FGR activation. Phosphorylation by SRC promotes MYLK binding. Tyrosine phosphorylation in transformed cells may contribute to cellular growth regulation and transformation. Phosphorylated by PKN2 at both serine and threonine residues in a GTP-bound Rac1-dependent manner in hyaluronan-induced astrocytes and hence down-regulated CTTN ability to associate with filamentous actin. Phosphorylated on tyrosine residues in response to CHRM1 activation. Phosphorylated by PTK2/FAK1 in response to cell adhesion. Detected in liver (at protein level).

It localises to the cytoplasm. Its subcellular location is the cytoskeleton. The protein resides in the cell projection. It is found in the lamellipodium. The protein localises to the ruffle. It localises to the dendrite. Its subcellular location is the cell membrane. The protein resides in the podosome. It is found in the cell junction. The protein localises to the focal adhesion. It localises to the membrane. Its subcellular location is the clathrin-coated pit. The protein resides in the dendritic spine. It is found in the cell cortex. The protein localises to the endoplasmic reticulum. In terms of biological role, contributes to the organization of the actin cytoskeleton and cell shape. Plays a role in the formation of lamellipodia and in cell migration. Plays a role in the regulation of neuron morphology, axon growth and formation of neuronal growth cones. Through its interaction with CTTNBP2, involved in the regulation of neuronal spine density. Plays a role in focal adhesion assembly and turnover. In complex with ABL1 and MYLK regulates cortical actin-based cytoskeletal rearrangement critical to sphingosine 1-phosphate (S1P)-mediated endothelial cell (EC) barrier enhancement. Plays a role in intracellular protein transport and endocytosis, and in modulating the levels of potassium channels present at the cell membrane. Plays a role in receptor-mediated endocytosis via clathrin-coated pits. Required for stabilization of KCNH1 channels at the cell membrane. This is Src substrate cortactin from Rattus norvegicus (Rat).